We begin with the raw amino-acid sequence, 469 residues long: Putative arginine/ornithine antiporter (469 aa).

Helical transmembrane passes span 8–28 (GFWL…IFSL), 44–64 (AWLL…HLSI), 90–110 (AGFT…VAII), 144–164 (LTFA…VASI), 179–199 (VLGF…SLFG), 213–233 (IGIG…FVGI), 254–274 (ITGL…TMGV), 301–321 (VIMA…WILL), 347–367 (SPVI…FSVI), 375–395 (FTFL…VSAI), 417–437 (DGLI…TGTA), and 439–459 (LTTF…YPFV).

It belongs to the amino acid-polyamine-organocation (APC) superfamily. Basic amino acid/polyamine antiporter (APA) (TC 2.A.3.2) family.

Its subcellular location is the cell membrane. The catalysed reaction is L-ornithine(in) + L-arginine(out) = L-ornithine(out) + L-arginine(in). Catalyzes electroneutral exchange between L-arginine and L-ornithine. The polypeptide is Putative arginine/ornithine antiporter (yvsH) (Bacillus subtilis (strain 168)).